The chain runs to 85 residues: MAKTQSPLQWLATTLIRGYQVFISPFLGANKCRFHPTCSTYAIEAIRLHGFAKGSWLAARRILKCHPLHPGGIDPVPPKKHRCNK.

The protein belongs to the UPF0161 family.

Its subcellular location is the cell inner membrane. Functionally, could be involved in insertion of integral membrane proteins into the membrane. This chain is Putative membrane protein insertion efficiency factor, found in Shewanella sediminis (strain HAW-EB3).